Here is a 173-residue protein sequence, read N- to C-terminus: Protein GrpE (173 aa).

Belongs to the GrpE family. In terms of assembly, homodimer.

It is found in the cytoplasm. In terms of biological role, participates actively in the response to hyperosmotic and heat shock by preventing the aggregation of stress-denatured proteins, in association with DnaK and GrpE. It is the nucleotide exchange factor for DnaK and may function as a thermosensor. Unfolded proteins bind initially to DnaJ; upon interaction with the DnaJ-bound protein, DnaK hydrolyzes its bound ATP, resulting in the formation of a stable complex. GrpE releases ADP from DnaK; ATP binding to DnaK triggers the release of the substrate protein, thus completing the reaction cycle. Several rounds of ATP-dependent interactions between DnaJ, DnaK and GrpE are required for fully efficient folding. The chain is Protein GrpE from Campylobacter fetus subsp. fetus (strain 82-40).